Here is a 601-residue protein sequence, read N- to C-terminus: Pyranose 2-oxidase (601 aa).

Residue H151 is modified to Tele-8alpha-FAD histidine. Positions 406 and 408 each coordinate substrate. Residue H505 is the Proton acceptor of the active site. Residue N558 is part of the active site. Positions 577-601 are disordered; that stretch reads KLGKKGSHSGNRDDGDVDTDTDDDA. Residues 591–601 are compositionally biased toward acidic residues; it reads GDVDTDTDDDA.

It belongs to the GMC oxidoreductase family. Homotetramer. FAD is required as a cofactor.

The catalysed reaction is D-glucose + O2 = 2-dehydro-D-glucose + H2O2. Its function is as follows. Catalyzes the oxidation of various aldopyranoses and disaccharides on carbon-2 to the corresponding 2-keto sugars concomitant with the reduction of O(2) to H(2)O(2). This Emericella nidulans (strain FGSC A4 / ATCC 38163 / CBS 112.46 / NRRL 194 / M139) (Aspergillus nidulans) protein is Pyranose 2-oxidase (p2ox).